A 217-amino-acid polypeptide reads, in one-letter code: MTSLPFPLSPEPDEASREAGRLLFAGPCDFVKGVTTMEALPPADRIEVCFAGRSNVGKSSLINALTGRKALARASNTPGRTQEINYFALGPSRYLVDLPGYGYAEAPKPIVQRWQRLLKGYLAGRQTLRRAFVLIDTRHGVKSVDEEILTLLDRSAVTFQVVMTKADKVSQAEREAVLDQVRGALKKHPAAYPELVMTSSEKGMGIETLRTIVATLG.

An EngB-type G domain is found at Asp-44 to Gly-217. GTP is bound by residues Gly-52–Ser-59, Gly-79–Glu-83, Asp-97–Gly-100, Thr-164–Asp-167, and Thr-198–Ser-200. Residues Ser-59 and Thr-81 each contribute to the Mg(2+) site.

This sequence belongs to the TRAFAC class TrmE-Era-EngA-EngB-Septin-like GTPase superfamily. EngB GTPase family. Mg(2+) is required as a cofactor.

In terms of biological role, necessary for normal cell division and for the maintenance of normal septation. This Cereibacter sphaeroides (strain ATCC 17023 / DSM 158 / JCM 6121 / CCUG 31486 / LMG 2827 / NBRC 12203 / NCIMB 8253 / ATH 2.4.1.) (Rhodobacter sphaeroides) protein is Probable GTP-binding protein EngB.